The sequence spans 407 residues: Methylthioribose kinase (407 aa).

ATP contacts are provided by residues asparagine 40, lysine 57, and 111 to 113; that span reads EDL. Aspartate 229 is a substrate binding site. 246-248 is an ATP binding site; it reads DAE. Arginine 344 provides a ligand contact to substrate.

The protein belongs to the methylthioribose kinase family. In terms of assembly, homodimer.

It catalyses the reaction 5-(methylsulfanyl)-D-ribose + ATP = 5-(methylsulfanyl)-alpha-D-ribose 1-phosphate + ADP + H(+). It functions in the pathway amino-acid biosynthesis; L-methionine biosynthesis via salvage pathway; S-methyl-5-thio-alpha-D-ribose 1-phosphate from S-methyl-5'-thioadenosine (hydrolase route): step 2/2. In terms of biological role, catalyzes the phosphorylation of methylthioribose into methylthioribose-1-phosphate. The polypeptide is Methylthioribose kinase (Yersinia pseudotuberculosis serotype IB (strain PB1/+)).